The following is an 82-amino-acid chain: RNA-binding protein GTNG_0100 (82 aa).

It belongs to the eukaryotic ribosomal protein eL8 family.

This is RNA-binding protein GTNG_0100 from Geobacillus thermodenitrificans (strain NG80-2).